Reading from the N-terminus, the 932-residue chain is MYKIKHSFNKTLIAISISSFLSIAYATESIENPQPIIQLSESLSSKYSGKGVKLGVMDEGFMVKHPRHSSHLHPLIHQLTTPEGEVRIYDASYPQFEVNPVEKEDGIDLIPSLETHGAGVAGIIAAQADKTLGDGYSGGIAKGAELYVATKSYKRTLEKVIQDAKKELENAKDEEDEKTPSLDQMAKNDLLASKEKEMAIERAEWASGLNKLLDNNVFAINNSWNPFSISDDINVVDKFYQSIKQNKHNPLLQAIMRAKNSNTLLVFAAGNESKKQPGVMALLPRYFPELEKNLISAVAVDKEQKIASYSNHCGASKNWCVAAPGDLHVLIGVADEHKKPQYGLTKEQGTSFSAPAITASLAVLKERFDYLTATQIRDTLLTTATDLGEKGVDNVYGWGLINLKKAVNGPTQFLNDETITVTRDDHWSNPLASQFKITKKGDKSLHLDGENHLDTVAVEEGRLALNGKTKVKTISNHANLAVNGTEVEQNYSSSGQSQLEVLGKSGLIANAQANIHLAGSLKIDDKLTEKTEAGDVSATVVQLKDKATYQGGFTQLVENENLAKRGLIQDLYFKESEIIAKVNKPLTDEKADTNGQAGLALLNALRTTPIAYRRSWYNGWLQSALEQRKLDNLHYAVSNNIYADSLELLRSQNRKGLTQAQQHLFTAYHTPLQTTVWAEHLNQKQSASSKHTDVKHHQSQLGVNHKLADKTVLSATLSQQKNRLEKPFAQATLKQTALNIGLRYHLDNAWFSEATLQFARQKYQQSRRFASHQLGTAETRGSTLGGEMRIGYQFMPNQWIIEPSLGVQWIQTKMNGLNESGELATQTAAMRYRDVNIVPSVKLQRTFQLEQGSISPYIGLNYLHRLNGKITKITSNIAGKTLHSEATTKRNRQLNGEVGVKLHYKNWFTAMNLDYSRVKSCKPIWLESKCWL.

The signal sequence occupies residues 1–24 (MYKIKHSFNKTLIAISISSFLSIA). The region spanning 25–407 (YATESIENPQ…WGLINLKKAV (383 aa)) is the Peptidase S8 domain. Active-site charge relay system residues include Asp58, His116, and Ser351. An Autotransporter domain is found at 669 to 932 (HTPLQTTVWA…PIWLESKCWL (264 aa)).

It belongs to the peptidase S8 family.

The protein localises to the cell outer membrane. This Mannheimia haemolytica (Pasteurella haemolytica) protein is Serotype-specific antigen 1 (ssa1).